The primary structure comprises 407 residues: Probable tRNA sulfurtransferase (407 aa).

The THUMP domain maps to 61 to 165 (NEITYRLSKI…LDAIYMYEEV (105 aa)). ATP contacts are provided by residues 183–184 (ML), 208–209 (HF), arginine 265, glycine 287, and glutamine 296.

It belongs to the ThiI family.

Its subcellular location is the cytoplasm. The enzyme catalyses [ThiI sulfur-carrier protein]-S-sulfanyl-L-cysteine + a uridine in tRNA + 2 reduced [2Fe-2S]-[ferredoxin] + ATP + H(+) = [ThiI sulfur-carrier protein]-L-cysteine + a 4-thiouridine in tRNA + 2 oxidized [2Fe-2S]-[ferredoxin] + AMP + diphosphate. It carries out the reaction [ThiS sulfur-carrier protein]-C-terminal Gly-Gly-AMP + S-sulfanyl-L-cysteinyl-[cysteine desulfurase] + AH2 = [ThiS sulfur-carrier protein]-C-terminal-Gly-aminoethanethioate + L-cysteinyl-[cysteine desulfurase] + A + AMP + 2 H(+). Its pathway is cofactor biosynthesis; thiamine diphosphate biosynthesis. Functionally, catalyzes the ATP-dependent transfer of a sulfur to tRNA to produce 4-thiouridine in position 8 of tRNAs, which functions as a near-UV photosensor. Also catalyzes the transfer of sulfur to the sulfur carrier protein ThiS, forming ThiS-thiocarboxylate. This is a step in the synthesis of thiazole, in the thiamine biosynthesis pathway. The sulfur is donated as persulfide by IscS. The chain is Probable tRNA sulfurtransferase from Staphylococcus aureus (strain MSSA476).